The following is a 242-amino-acid chain: Phosphoribosylaminoimidazole-succinocarboxamide synthase (242 aa).

Belongs to the SAICAR synthetase family.

It carries out the reaction 5-amino-1-(5-phospho-D-ribosyl)imidazole-4-carboxylate + L-aspartate + ATP = (2S)-2-[5-amino-1-(5-phospho-beta-D-ribosyl)imidazole-4-carboxamido]succinate + ADP + phosphate + 2 H(+). It functions in the pathway purine metabolism; IMP biosynthesis via de novo pathway; 5-amino-1-(5-phospho-D-ribosyl)imidazole-4-carboxamide from 5-amino-1-(5-phospho-D-ribosyl)imidazole-4-carboxylate: step 1/2. The sequence is that of Phosphoribosylaminoimidazole-succinocarboxamide synthase from Prochlorococcus marinus subsp. pastoris (strain CCMP1986 / NIES-2087 / MED4).